A 200-amino-acid polypeptide reads, in one-letter code: ATP-dependent Clp protease proteolytic subunit (200 aa).

Ser98 acts as the Nucleophile in catalysis. The active site involves His123.

This sequence belongs to the peptidase S14 family. In terms of assembly, fourteen ClpP subunits assemble into 2 heptameric rings which stack back to back to give a disk-like structure with a central cavity, resembling the structure of eukaryotic proteasomes.

Its subcellular location is the cytoplasm. The catalysed reaction is Hydrolysis of proteins to small peptides in the presence of ATP and magnesium. alpha-casein is the usual test substrate. In the absence of ATP, only oligopeptides shorter than five residues are hydrolyzed (such as succinyl-Leu-Tyr-|-NHMec, and Leu-Tyr-Leu-|-Tyr-Trp, in which cleavage of the -Tyr-|-Leu- and -Tyr-|-Trp bonds also occurs).. Cleaves peptides in various proteins in a process that requires ATP hydrolysis. Has a chymotrypsin-like activity. Plays a major role in the degradation of misfolded proteins. This is ATP-dependent Clp protease proteolytic subunit from Deinococcus geothermalis (strain DSM 11300 / CIP 105573 / AG-3a).